A 255-amino-acid polypeptide reads, in one-letter code: Small ribosomal subunit protein uS2 (255 aa).

Residues Q230–G255 are disordered.

Belongs to the universal ribosomal protein uS2 family.

This Rhizobium etli (strain CIAT 652) protein is Small ribosomal subunit protein uS2.